Consider the following 354-residue polypeptide: Rhodopsin (354 aa).

Residues 1–36 (MNGTEGPNFYVPFSNKSGVVRSPFEYPQYYLAEPWQ) lie on the Extracellular side of the membrane. Asn2 and Asn15 each carry an N-linked (GlcNAc...) asparagine glycan. The chain crosses the membrane as a helical span at residues 37 to 61 (YSVLAAYMFLLILLGFPVNFLTLYV). Topologically, residues 62-73 (TIQHKKLRTPLN) are cytoplasmic. Residues 74 to 96 (YILLNLAFANHFMVFGGFPVTMY) traverse the membrane as a helical segment. Residues 97-110 (SSMHGYFVFGQTGC) lie on the Extracellular side of the membrane. Cys110 and Cys187 are joined by a disulfide. The chain crosses the membrane as a helical span at residues 111–133 (YIEGFFATMGGEIALWSLVVLAI). Positions 134–136 (ERY) match the 'Ionic lock' involved in activated form stabilization motif. Topologically, residues 134-152 (ERYVVVCKPMSNFRFGENH) are cytoplasmic. A helical membrane pass occupies residues 153–173 (AIMGVMMTWIMALACAAPPLF). At 174 to 202 (GWSRYIPEGMQCSCGVDYYTLKPEVNNES) the chain is on the extracellular side. A helical membrane pass occupies residues 203 to 224 (FVIYMFLVHFTIPLMIIFFCYG). Residues 225-252 (RLVCTVKEAAAQQQESATTQKAEKEVTR) lie on the Cytoplasmic side of the membrane. A helical membrane pass occupies residues 253 to 274 (MVIIMVVAFLICWVPYASVAFY). The Extracellular portion of the chain corresponds to 275–286 (IFSNQGTDFGPI). The helical transmembrane segment at 287-308 (FMTVPAFFAKSSAIYNPVIYIV) threads the bilayer. Lys296 is subject to N6-(retinylidene)lysine. The Cytoplasmic segment spans residues 309 to 354 (LNKQFRNCMITTICCGKNPFGDDETTSAATSKTEASSVSSSQVSPA). Residues Cys322 and Cys323 are each lipidated (S-palmitoyl cysteine). Positions 332–354 (ETTSAATSKTEASSVSSSQVSPA) are disordered. The segment covering 334–354 (TSAATSKTEASSVSSSQVSPA) has biased composition (low complexity).

This sequence belongs to the G-protein coupled receptor 1 family. Opsin subfamily. In terms of processing, contains one covalently linked retinal chromophore. Upon light absorption, the covalently bound 11-cis-retinal is converted to all-trans-retinal. After hydrolysis of the Schiff base and release of the covalently bound all-trans-retinal, active rhodopsin is regenerated by binding of a fresh molecule of 11-cis-retinal.

The protein resides in the membrane. It is found in the cell projection. The protein localises to the cilium. Its subcellular location is the photoreceptor outer segment. In terms of biological role, photoreceptor required for image-forming vision at low light intensity. Required for photoreceptor cell viability after birth. Light-induced isomerization of 11-cis to all-trans retinal triggers a conformational change that activates signaling via G-proteins. Subsequent receptor phosphorylation mediates displacement of the bound G-protein alpha subunit by arrestin and terminates signaling. In Ambystoma tigrinum (Eastern tiger salamander), this protein is Rhodopsin (RHO).